A 297-amino-acid polypeptide reads, in one-letter code: Cell division protein FtsX (297 aa).

The Cytoplasmic segment spans residues Met-1–Thr-24. A helical transmembrane segment spans residues Phe-25–Ile-45. The Extracellular segment spans residues Met-46–Asn-171. A helical membrane pass occupies residues Ile-172–Ile-192. Residues Lys-193 to Pro-219 are Cytoplasmic-facing. Residues Phe-220–Leu-240 traverse the membrane as a helical segment. The Extracellular segment spans residues Val-241 to Gln-270. Residues Leu-271–Ile-291 traverse the membrane as a helical segment. The Cytoplasmic portion of the chain corresponds to Arg-292–Val-297.

It belongs to the ABC-4 integral membrane protein family. FtsX subfamily. In terms of assembly, interacts with FtsE.

The protein localises to the cell membrane. In terms of biological role, part of the ABC transporter FtsEX involved in asymmetric cellular division facilitating the initiation of sporulation. The sequence is that of Cell division protein FtsX from Bacillus anthracis.